Reading from the N-terminus, the 344-residue chain is Nuclear distribution protein nudE homolog 1 (344 aa).

The interval 1-93 (MEDSGKTFES…MQHSEGYRQI (93 aa)) is self-association. Residues 18 to 188 (WRDLAMTYKQ…ELAVQQKQDK (171 aa)) are a coiled coil. Residues 88–156 (EGYRQISALE…ERNAFLESEL (69 aa)) form an interaction with PAFAH1B1 region. Positions 167–290 (QRLKDEARDL…QSPSRTSGPA (124 aa)) are interaction with CENPF. The segment at 181 to 246 (AVQQKQDKPR…DSSTSGTPLT (66 aa)) is disordered. A Phosphoserine modification is found at Ser-211. Phosphothreonine occurs at positions 215 and 228. Ser-239 is modified (phosphoserine). 2 positions are modified to phosphothreonine: Thr-243 and Thr-246. A lipid anchor (S-palmitoyl cysteine; by ZDHHC2, ZDHHC3 and ZDHHC7) is attached at Cys-274. Polar residues predominate over residues 279-289 (YDQSPSRTSGP). Residues 279–337 (YDQSPSRTSGPASGRGTKNRDGVDRRPGSTSVGDKGSGKRLEFGKPASEPASPALPSAQ) form a disordered region. Ser-282 is subject to Phosphoserine. The segment covering 296–305 (KNRDGVDRRP) has biased composition (basic and acidic residues). Ser-309 bears the Phosphoserine mark. Over residues 324-336 (PASEPASPALPSA) the composition is skewed to low complexity.

The protein belongs to the nudE family. Homodimer. Interacts with dynactin and PCM1. Interacts with CENPF, LIS1, CNTRL, dynein, tubulin gamma, PAFAH1B1, PCNT, SLMAP and TCP1. Interacts with ZNF365. Interacts with RAB9A; the interaction leads to RAB9A-dynein motor tethering. Interacts (via C-terminus) with MCRS1 (via C-terminus); phosphorylation of NDE1 inhibits the interaction. In terms of processing, phosphorylated in mitosis. Phosphorylation at Thr-246 is essential for the G2/M transition. Highly expressed in ovary. Also expressed in brain, heart, kidney, large intestine, liver, lung, small intestine and testis.

It is found in the cytoplasm. The protein localises to the cytoskeleton. It localises to the microtubule organizing center. The protein resides in the centrosome. Its subcellular location is the spindle. It is found in the chromosome. The protein localises to the centromere. It localises to the kinetochore. The protein resides in the cleavage furrow. Its subcellular location is the cytoplasmic vesicle membrane. Functionally, required for centrosome duplication and formation and function of the mitotic spindle. Essential for the development of the cerebral cortex. May regulate the production of neurons by controlling the orientation of the mitotic spindle during division of cortical neuronal progenitors of the proliferative ventricular zone of the brain. Orientation of the division plane perpendicular to the layers of the cortex gives rise to two proliferative neuronal progenitors whereas parallel orientation of the division plane yields one proliferative neuronal progenitor and a postmitotic neuron. A premature shift towards a neuronal fate within the progenitor population may result in an overall reduction in the final number of neurons and an increase in the number of neurons in the deeper layers of the cortex. Acts as a RAB9A/B effector that tethers RAB9-associated late endosomes to the dynein motor for their retrograde transport to the trans-Golgi network. The protein is Nuclear distribution protein nudE homolog 1 of Mus musculus (Mouse).